Here is a 56-residue protein sequence, read N- to C-terminus: Large ribosomal subunit protein bL33 (56 aa).

The protein belongs to the bacterial ribosomal protein bL33 family.

The chain is Large ribosomal subunit protein bL33 from Anaplasma marginale (strain Florida).